A 494-amino-acid chain; its full sequence is ETS translocation variant 4 (494 aa).

2 disordered regions span residues 82–113 (ENSV…SHKQ) and 139–201 (AGGS…SGSA). Residues 100–113 (SPGSDPSQSCSHKQ) show a composition bias toward polar residues. Residues 176 to 187 (SSSQSHACHSHS) show a composition bias toward low complexity. Positions 188–197 (YPMNPSSRFP) are enriched in polar residues. Positions 350 to 430 (LQLWQFLVAL…AGERYVYKFV (81 aa)) form a DNA-binding region, ETS.

Belongs to the ETS family. In terms of processing, phosphorylated. In the embryo, expressed ubiquitously until the late blastula stage, in the marginal zone of gastrula stages, in the presumptive forebrain and hindbrain and in the trunk region of early somite stages. In later stages, also expressed in Rohon-Beard neurons, epiphysis, lateral line placodes, pectoral fin buds, developing lens and heart.

It is found in the nucleus. Functionally, transcriptional activator that binds to the (5'-CCGGA[AT]-3') motif. May control the acquisition of specific cell fates at an early stage during development of the somites and nervous system. May mediate the cellular effects of the fibroblast growth factors on embryogenesis. The protein is ETS translocation variant 4 (etv4) of Danio rerio (Zebrafish).